The sequence spans 160 residues: Phosphopantetheine adenylyltransferase (160 aa).

Residue S10 coordinates substrate. ATP contacts are provided by residues 10 to 11 (SF) and H18. K42, T74, and R88 together coordinate substrate. ATP-binding positions include 89-91 (GLR), E99, and 124-130 (YSFISST).

This sequence belongs to the bacterial CoaD family. In terms of assembly, homohexamer. Mg(2+) serves as cofactor.

The protein localises to the cytoplasm. The catalysed reaction is (R)-4'-phosphopantetheine + ATP + H(+) = 3'-dephospho-CoA + diphosphate. It functions in the pathway cofactor biosynthesis; coenzyme A biosynthesis; CoA from (R)-pantothenate: step 4/5. In terms of biological role, reversibly transfers an adenylyl group from ATP to 4'-phosphopantetheine, yielding dephospho-CoA (dPCoA) and pyrophosphate. The sequence is that of Phosphopantetheine adenylyltransferase from Leptospira borgpetersenii serovar Hardjo-bovis (strain L550).